Reading from the N-terminus, the 453-residue chain is Zinc finger CCCH domain-containing protein 26 (453 aa).

Residues 1-15 show a composition bias toward polar residues; it reads MSETQQQVQNSTGSI. Residues 1 to 47 are disordered; the sequence is MSETQQQVQNSTGSIRSPDKIEDTFRRMKVNEDNMEQSSPYPDRPGE. Residue Ser2 is modified to N-acetylserine. The segment covering 17–32 has biased composition (basic and acidic residues); sequence SPDKIEDTFRRMKVNE. 5 C3H1-type zinc fingers span residues 44–72, 95–112, 129–157, 261–289, and 307–335; these read RPGE…HPLT, ETGA…HPKD, RQGE…HPHP, FSER…HPKE, and RPGQ…HSML. Residues 360-379 show a composition bias toward polar residues; it reads STNLRISSPPSPSDMTTLSN. Residues 360–453 form a disordered region; the sequence is STNLRISSPP…KVQDSSDKST (94 aa). The span at 391 to 407 shows a compositional bias: basic and acidic residues; it reads ETEKQDDSPTEPEKSEV. Residues 413-422 are compositionally biased toward polar residues; it reads PNGSDSTSLP. Residues 441–453 show a composition bias toward basic and acidic residues; the sequence is DSSKVQDSSDKST.

The protein resides in the nucleus. The sequence is that of Zinc finger CCCH domain-containing protein 26 (ZFN2) from Arabidopsis thaliana (Mouse-ear cress).